The chain runs to 240 residues: Cysteine-rich venom protein ablomin (240 aa).

An N-terminal signal peptide occupies residues M1–G19. An SCP domain is found at V38–Y166. 8 cysteine pairs are disulfide-bonded: C75–C153, C92–C167, C148–C164, C186–C193, C189–C198, C202–C235, C211–C229, and C220–C233. The ShKT domain occupies C202–C235.

It belongs to the CRISP family. Expressed by the venom gland.

The protein resides in the secreted. Functionally, blocks contraction of smooth muscle elicited by high potassium-induced depolarization, but does not block caffeine-stimulated contraction. Since high potassium-treatment activates voltage-gated channels and caffeine exposure activates ryanodine receptors, this toxin may target L-type voltage-gated calcium channels (Cav) (and not ryanodine receptors) on smooth muscle. This toxin also shows a little inhibition on cyclic nucleotide-gated CNGA1 channel. The sequence is that of Cysteine-rich venom protein ablomin from Gloydius blomhoffii (Mamushi).